The following is a 332-amino-acid chain: Arabinogalactan endo-beta-1,4-galactanase (332 aa).

Residue Asn-111 is glycosylated (N-linked (GlcNAc...) asparagine). Glu-135 functions as the Proton donor in the catalytic mechanism. The active-site Nucleophile is the Glu-245.

It belongs to the glycosyl hydrolase 53 family.

The enzyme catalyses The enzyme specifically hydrolyzes (1-&gt;4)-beta-D-galactosidic linkages in type I arabinogalactans.. In Thermothelomyces thermophilus (Myceliophthora thermophila), this protein is Arabinogalactan endo-beta-1,4-galactanase.